Reading from the N-terminus, the 248-residue chain is Large ribosomal subunit protein uL4 (248 aa).

Positions 45–105 (PYGADPYAGM…KDQSKSVNTK (61 aa)) are disordered. The segment covering 92–105 (PKAEKDQSKSVNTK) has biased composition (basic and acidic residues).

This sequence belongs to the universal ribosomal protein uL4 family. Part of the 50S ribosomal subunit.

In terms of biological role, one of the primary rRNA binding proteins, this protein initially binds near the 5'-end of the 23S rRNA. It is important during the early stages of 50S assembly. It makes multiple contacts with different domains of the 23S rRNA in the assembled 50S subunit and ribosome. Functionally, forms part of the polypeptide exit tunnel. The polypeptide is Large ribosomal subunit protein uL4 (Haloquadratum walsbyi (strain DSM 16790 / HBSQ001)).